Reading from the N-terminus, the 491-residue chain is MTNYFNSLSLRDQLAQLGTCRFMELDEFSNEVAVLKDKKIVIVGCGAQGLNQGLNMRDSGLDISYALREGAIKEKRQSWKNATENNFNVGTYEELIPKADLVINLTPDKQHTSVIKAIQPHIKKDAVLSYSHGFNIVEEGTKIREDITVIMVAPKCPGTEVREEYKRGFGVPTLIAVHPENDPHGIGLDWAKAYAYATGGHRAGVLESSFVAEVKSDLMGEQTMLCGVLQTGSILTFDKMVADGVEPNYAAKLIQYGWETITEALKHGGITNMMDRLSNPAKLRANEIAEELKEKMRPLFQKHMDDIISGEFSSRMMRDWANDDKELLTWRAETENTAFEKTEATSEEIKEQEYFDKGVLMVAFVRAGVELAFETMVEAGIIEESAYYESLHETPLIANTIARKKLYEMNRVISDTAEYGCYLFDHAAKPLVKDYVNSLEPEVAGKKFGTDCNGVDNQKLIHVNDDLRSHPVEKVGARLRTAMTAMKKIYA.

The KARI N-terminal Rossmann domain maps to 15–208 (AQLGTCRFME…GGHRAGVLES (194 aa)). Residues 45 to 48 (CGAQ), R68, R76, S78, and 108 to 110 (DKQ) each bind NADP(+). Residue H132 is part of the active site. G158 serves as a coordination point for NADP(+). 2 KARI C-terminal knotted domains span residues 209 to 353 (SFVA…KEQE) and 354 to 486 (YFDK…MTAM). Positions 217, 221, 389, and 393 each coordinate Mg(2+). Substrate is bound at residue S414.

This sequence belongs to the ketol-acid reductoisomerase family. Requires Mg(2+) as cofactor.

It catalyses the reaction (2R)-2,3-dihydroxy-3-methylbutanoate + NADP(+) = (2S)-2-acetolactate + NADPH + H(+). The enzyme catalyses (2R,3R)-2,3-dihydroxy-3-methylpentanoate + NADP(+) = (S)-2-ethyl-2-hydroxy-3-oxobutanoate + NADPH + H(+). The protein operates within amino-acid biosynthesis; L-isoleucine biosynthesis; L-isoleucine from 2-oxobutanoate: step 2/4. It functions in the pathway amino-acid biosynthesis; L-valine biosynthesis; L-valine from pyruvate: step 2/4. Involved in the biosynthesis of branched-chain amino acids (BCAA). Catalyzes an alkyl-migration followed by a ketol-acid reduction of (S)-2-acetolactate (S2AL) to yield (R)-2,3-dihydroxy-isovalerate. In the isomerase reaction, S2AL is rearranged via a Mg-dependent methyl migration to produce 3-hydroxy-3-methyl-2-ketobutyrate (HMKB). In the reductase reaction, this 2-ketoacid undergoes a metal-dependent reduction by NADPH to yield (R)-2,3-dihydroxy-isovalerate. This chain is Ketol-acid reductoisomerase (NADP(+)), found in Christiangramia forsetii (strain DSM 17595 / CGMCC 1.15422 / KT0803) (Gramella forsetii).